Reading from the N-terminus, the 387-residue chain is uncharacterized protein (387 aa).

This sequence belongs to the geranylgeranyl reductase family. ChlP subfamily.

This is an uncharacterized protein from Methanosarcina barkeri (strain Fusaro / DSM 804).